The chain runs to 488 residues: Glutamate--tRNA ligase (488 aa).

A 'HIGH' region motif is present at residues 8–18 (PSPTGPLHIGG). Residues cysteine 105, cysteine 107, cysteine 132, and histidine 134 each contribute to the Zn(2+) site. Residues 249-253 (KMSKR) carry the 'KMSKS' region motif. Lysine 252 contributes to the ATP binding site.

Belongs to the class-I aminoacyl-tRNA synthetase family. Glutamate--tRNA ligase type 1 subfamily. As to quaternary structure, monomer. Zn(2+) is required as a cofactor.

The protein resides in the cytoplasm. The catalysed reaction is tRNA(Glu) + L-glutamate + ATP = L-glutamyl-tRNA(Glu) + AMP + diphosphate. Its function is as follows. Catalyzes the attachment of glutamate to tRNA(Glu) in a two-step reaction: glutamate is first activated by ATP to form Glu-AMP and then transferred to the acceptor end of tRNA(Glu). This chain is Glutamate--tRNA ligase, found in Desulfitobacterium hafniense (strain Y51).